Reading from the N-terminus, the 333-residue chain is tRNA N6-adenosine threonylcarbamoyltransferase (333 aa).

Fe cation-binding residues include His111 and His115. Substrate-binding positions include 134–138 (VVSGG), Asp167, Gly180, Asp184, and Asn273. Residue Asp302 participates in Fe cation binding.

It belongs to the KAE1 / TsaD family. Requires Fe(2+) as cofactor.

The protein localises to the cytoplasm. It catalyses the reaction L-threonylcarbamoyladenylate + adenosine(37) in tRNA = N(6)-L-threonylcarbamoyladenosine(37) in tRNA + AMP + H(+). Its function is as follows. Required for the formation of a threonylcarbamoyl group on adenosine at position 37 (t(6)A37) in tRNAs that read codons beginning with adenine. Is involved in the transfer of the threonylcarbamoyl moiety of threonylcarbamoyl-AMP (TC-AMP) to the N6 group of A37, together with TsaE and TsaB. TsaD likely plays a direct catalytic role in this reaction. The polypeptide is tRNA N6-adenosine threonylcarbamoyltransferase (Anaeromyxobacter sp. (strain Fw109-5)).